Here is a 368-residue protein sequence, read N- to C-terminus: MNLTFKNLQQQKFVISDVSADTKISELKEKIQTQQNYEVERQKLIYSGRILADDKTVGEYNIKEQDFIVCMVSRPKTSTSTPKSAASPAPNPPASVPEKKVEAPSSTVAESTSTTQTVAAAAPSNPDTTATSEAPIDANTLAVGAQRNVAVENMVEMGYERSEVERAMRAAFNNPDRAVEYLLTGIPEDILNRQREESAAALAAQQQQSEALAPTSTGQPANLFEQAALSENENQEQPSNTVGDDPLGFLRSIPQFQQLRQIVQQNPQMLETILQQIGQGDPALAQAITQNPEAFLQLLAEGAEGESALPSGGIQIQITQEESESIDRLCQLGFDRNIVIQAYLACDKNEELAANYLFEHGHESEDEP.

A Ubiquitin-like domain is found at 1-77; sequence MNLTFKNLQQ…IVCMVSRPKT (77 aa). Composition is skewed to low complexity over residues 76–88 and 103–124; these read KTST…AASP and APSS…AAPS. The interval 76–134 is disordered; that stretch reads KTSTSTPKSAASPAPNPPASVPEKKVEAPSSTVAESTSTTQTVAAAAPSNPDTTATSEA. 2 positions are modified to phosphoserine: serine 84 and serine 87. 2 UBA domains span residues 135–185 and 320–360; these read PIDA…LLTG and QEES…LFEH. At serine 364 the chain carries Phosphoserine.

It is found in the nucleus. Functionally, involved in postreplication repair of UV-damaged DNA. Postreplication repair functions in gap-filling of a daughter strand on replication of damaged DNA. Its function is as follows. Protects ubiquitin chains against dissambly by deubiquitinating enzymes thereby promoting protein degradation. In Schizosaccharomyces pombe (strain 972 / ATCC 24843) (Fission yeast), this protein is UV excision repair protein rhp23 (rhp23).